The primary structure comprises 76 residues: Antimicrobial peptide lumbricin-1 (76 aa).

Positions 1 to 14 (MSLCISDYLYLTLT) are cleaved as a propeptide — removed in mature form.

Displays antimicrobial activity against the Gram-positive bacteria B.subtilis ATCC 62037, S.aureus ATCC 15752 and S.mutans ATCC 25175, the Gram-negative bacteria E.coli ATCC 27325, P.putida ATCC 17426 and Serratia sp. ATCC 21074, and the fungi C.albicans ATCC 10231, C.neoformans ATCC 34881 and S.cerevisiae ATCC 44774. Does not possess hemolytic activity. This is Antimicrobial peptide lumbricin-1 from Lumbricus rubellus (Humus earthworm).